The sequence spans 663 residues: DNA topoisomerase 4 subunit B (663 aa).

ATP is bound by residues Y7, N47, D74, 114-120 (GLHGVGA), and K341. Positions 386–416 (REAARKAREDARSGKKNKRKDTLLSGKLTPA) are disordered. The segment covering 387-398 (EAARKAREDARS) has biased composition (basic and acidic residues). The Toprim domain maps to 424 to 538 (NELYLVEGDS…ADRVFIALPP (115 aa)). Mg(2+) is bound by residues E430, D503, and D505.

Belongs to the type II topoisomerase family. ParE type 2 subfamily. As to quaternary structure, heterotetramer composed of ParC and ParE. Mg(2+) is required as a cofactor. Requires Mn(2+) as cofactor. It depends on Ca(2+) as a cofactor.

The catalysed reaction is ATP-dependent breakage, passage and rejoining of double-stranded DNA.. In terms of biological role, topoisomerase IV is essential for chromosome segregation. It relaxes supercoiled DNA. Performs the decatenation events required during the replication of a circular DNA molecule. The sequence is that of DNA topoisomerase 4 subunit B from Staphylococcus aureus (strain MSSA476).